The sequence spans 131 residues: Holo-[acyl-carrier-protein] synthase (131 aa).

Mg(2+)-binding residues include Asp8 and Glu59.

This sequence belongs to the P-Pant transferase superfamily. AcpS family. Mg(2+) is required as a cofactor.

The protein localises to the cytoplasm. The catalysed reaction is apo-[ACP] + CoA = holo-[ACP] + adenosine 3',5'-bisphosphate + H(+). Its function is as follows. Transfers the 4'-phosphopantetheine moiety from coenzyme A to a Ser of acyl-carrier-protein. This chain is Holo-[acyl-carrier-protein] synthase, found in Rickettsia felis (strain ATCC VR-1525 / URRWXCal2) (Rickettsia azadi).